A 200-amino-acid chain; its full sequence is Prolactin (200 aa).

3 disulfide bridges follow: C4-C11, C59-C175, and C192-C200.

The protein belongs to the somatotropin/prolactin family. In terms of tissue distribution, pituitary gland.

The protein localises to the secreted. The protein is Prolactin (prl) of Protopterus aethiopicus (Marbled lungfish).